Consider the following 807-residue polypeptide: MTDSPFLELWQSRAVSVREQLGLGDRPNDSYCYNSAKNSTVLQGVTFGGIPTVLLIDVSCFLFLILVFSIIRRRFWDYGRIALVSEADSEPRFQRLSSTSSSGQQDFENELGCCPWLTAIFRLHDDQILEWCGEDAIHYLSFQRHIIFLLVVVSFLSLCVILPVNLSGDLLDKDPYSFGRTTIANLQTDNDLLWLHTIFAVIYLFLTVGFMRHHTQSIKYKEENLVRRTLFITGLPRDARKETVESHFRDAYPTCEVVDVQLCYNVAKLIYLCKERKKTEKSLTYYTNLQVKTGQRTLINPKPCGQFCCCEVQGCEWEDAISYYTRMKDRLLERITEEERHVQDQPLGMAFVTFQEKSMATYILKDFNACKCQSLQCKGEPQPSSHSRELYTSKWTVTFAADPEDICWKNLSIQGLRWWLQWLGINFTLFLGLFFLTTPSIILSTMDKFNVTKPIHALNNPIISQFFPTLLLWSFSALLPSIVYYSTLLESHWTKSGENQIMMTKVYIFLIFMVLILPSLGLTSLDFFFRWLFDKTSSEASIRLECVFLPDQGAFFVNYVIASAFIGNGMELLRLPGLILYTFRMIMAKTAADRRNVKQNQAFQYEFGAMYAWMLCVFTVIMAYSITCPIIAPFGLIYILLKHMVDRHNLYFIYLPAKLEKGIHFAAVNQALAAPILCLFWLYFFSFLRLGMKAPATLFTFLVVLLTILVCLAHTCFGYFKHLSPLNYKTEEPASDKGSEAEAHMPPPFTPYVPRILNGLASERTALSPQQQQQQTYGAIHNISGTIPGQCLAQSATGSVAAAPQEA.

Topologically, residues 1 to 51 are extracellular; the sequence is MTDSPFLELWQSRAVSVREQLGLGDRPNDSYCYNSAKNSTVLQGVTFGGIP. Asn-38 carries N-linked (GlcNAc...) asparagine glycosylation. The chain crosses the membrane as a helical span at residues 52–74; the sequence is TVLLIDVSCFLFLILVFSIIRRR. The Cytoplasmic portion of the chain corresponds to 75 to 134; that stretch reads FWDYGRIALVSEADSEPRFQRLSSTSSSGQQDFENELGCCPWLTAIFRLHDDQILEWCGE. The chain crosses the membrane as a helical span at residues 135 to 167; the sequence is DAIHYLSFQRHIIFLLVVVSFLSLCVILPVNLS. The Extracellular portion of the chain corresponds to 168–191; sequence GDLLDKDPYSFGRTTIANLQTDND. The chain crosses the membrane as a helical span at residues 192-217; it reads LLWLHTIFAVIYLFLTVGFMRHHTQS. The Cytoplasmic segment spans residues 218–416; sequence IKYKEENLVR…CWKNLSIQGL (199 aa). The intracellular linker IL2; confers mechanosensitivity stretch occupies residues 219–414; sequence KYKEENLVRR…DICWKNLSIQ (196 aa). A helical membrane pass occupies residues 417 to 444; that stretch reads RWWLQWLGINFTLFLGLFFLTTPSIILS. Residues 445–462 lie on the Extracellular side of the membrane; that stretch reads TMDKFNVTKPIHALNNPI. Asn-450 is a glycosylation site (N-linked (GlcNAc...) asparagine). The chain crosses the membrane as a helical span at residues 463-490; that stretch reads ISQFFPTLLLWSFSALLPSIVYYSTLLE. The Cytoplasmic segment spans residues 491–495; the sequence is SHWTK. The helical transmembrane segment at 496–532 threads the bilayer; that stretch reads SGENQIMMTKVYIFLIFMVLILPSLGLTSLDFFFRWL. The Extracellular portion of the chain corresponds to 533–554; it reads FDKTSSEASIRLECVFLPDQGA. The chain crosses the membrane as a helical span at residues 555–586; it reads FFVNYVIASAFIGNGMELLRLPGLILYTFRMI. Positions 555–586 are gating helix; the sequence is FFVNYVIASAFIGNGMELLRLPGLILYTFRMI. Residues 587 to 606 are Cytoplasmic-facing; it reads MAKTAADRRNVKQNQAFQYE. The chain crosses the membrane as a helical span at residues 607 to 624; it reads FGAMYAWMLCVFTVIMAY. The Extracellular portion of the chain corresponds to 625–628; sequence SITC. The chain crosses the membrane as a helical span at residues 629 to 651; that stretch reads PIIAPFGLIYILLKHMVDRHNLY. At 652-661 the chain is on the cytoplasmic side; sequence FIYLPAKLEK. A helical transmembrane segment spans residues 662 to 689; sequence GIHFAAVNQALAAPILCLFWLYFFSFLR. Residues 690 to 694 are Extracellular-facing; it reads LGMKA. Residues 695–709 traverse the membrane as a helical segment; the sequence is PATLFTFLVVLLTIL. Over 710–807 the chain is Cytoplasmic; it reads VCLAHTCFGY…GSVAAAPQEA (98 aa). Position 739 is a phosphoserine (Ser-739).

Belongs to the CSC1 (TC 1.A.17) family. Monomer. Post-translationally, N-Glycosylated.

The protein resides in the lysosome membrane. Its subcellular location is the early endosome membrane. It is found in the cell membrane. The catalysed reaction is Ca(2+)(in) = Ca(2+)(out). Mechanosensitive cation channel with low conductance and high activation threshold. In contrast to TMEM63B, does not show phospholipid scramblase activity. Acts as a regulator of lysosomal morphology by mediating lysosomal mechanosensitivity. Important for the baby's first breath and respiration throughout life. Upon lung inflation conducts cation currents in alveolar type 1 and 2 cells triggering lamellar body exocytosis and surfactant secretion into airspace. Also acts as an osmosensitive cation channel preferentially activated by hypotonic stress. This chain is Mechanosensitive cation channel TMEM63A (TMEM63A), found in Pongo abelii (Sumatran orangutan).